A 55-amino-acid polypeptide reads, in one-letter code: Large ribosomal subunit protein bL32c (55 aa).

The segment at Met-1–Gly-24 is disordered.

The protein belongs to the bacterial ribosomal protein bL32 family.

It is found in the plastid. It localises to the chloroplast. This Phaeodactylum tricornutum (strain CCAP 1055/1) protein is Large ribosomal subunit protein bL32c.